The following is a 621-amino-acid chain: uncharacterized protein (621 aa).

3 helical membrane passes run Phe-240–Trp-260, Leu-548–Val-568, and Val-587–Met-607.

The protein localises to the cell membrane. This is an uncharacterized protein from Mycoplasma pneumoniae (strain ATCC 29342 / M129 / Subtype 1) (Mycoplasmoides pneumoniae).